We begin with the raw amino-acid sequence, 524 residues long: General transcription factor IIF subunit 1 (524 aa).

Disordered regions lie at residues 56–76 (MYQE…RKQR) and 181–462 (RLKD…IQLT). Basic residues predominate over residues 242–257 (KPQKKVPAKGGKKKKR). The segment covering 262–289 (EALEDSDDGDFEGQEVDYMSDESSSDEE) has biased composition (acidic residues). Over residues 290 to 307 (LPGKIKPAKEEEGPKGLD) the composition is skewed to basic and acidic residues. Acidic residues-rich tracts occupy residues 308-327 (EQSE…EEGE) and 347-358 (SDESETSEDSDI). Positions 368–378 (QKKKTPPKKDK) are enriched in basic residues. The segment covering 381–397 (GSNSSSRGNSRPGTPSP) has biased composition (low complexity). Positions 436 to 459 (PQNTSGKSTPQPQSGKSTPSSGDI) are enriched in polar residues.

This sequence belongs to the TFIIF alpha subunit family. Heterodimer of an alpha and a beta subunit. Phosphorylated on Ser and other residues by TAF1 and casein kinase II-like kinases.

Its subcellular location is the nucleus. TFIIF is a general transcription initiation factor that binds to RNA polymerase II and helps to recruit it to the initiation complex in collaboration with TFIIB. It promotes transcription elongation. This is General transcription factor IIF subunit 1 (gtf2f1) from Xenopus laevis (African clawed frog).